The chain runs to 307 residues: MAGLFSSAVAPTERRKALRAALAAPEIARMPGAFSPLAARAIQEAGFEGVYVSGAVVAADLALPDIGLTTLTEVAHRSRQIARVTDLPVLVDADTGFGEPMSAARTVSELEDAGVAGCHLEDQVNPKRCGHLDGKEVVGTDIMVRRIAAAVNERRDEQFVICARTDAAGVEGIDSAIERAKAYADAGADMIFTEALYSPADFEKFRAAVDIPLLANMTEFGKTELLPAQLLEDIGYNAVIYPVTLLRIAMGQVEQALGDIANTGIQTDWVDRMQHRSRLYELLRYNEYNAFDQQVFTYSADSYKPIF.

53 to 55 (SGA) is a substrate binding site. Mg(2+) is bound by residues Asp-92 and Asp-94. Substrate is bound by residues 129-130 (CG), Arg-164, Glu-194, 216-218 (NMT), Arg-247, and Arg-276.

The protein belongs to the isocitrate lyase/PEP mutase superfamily. Methylisocitrate lyase family. In terms of assembly, homotetramer; dimer of dimers. Mg(2+) is required as a cofactor.

The catalysed reaction is (2S,3R)-3-hydroxybutane-1,2,3-tricarboxylate = pyruvate + succinate. The protein operates within organic acid metabolism; propanoate degradation. Its function is as follows. Involved in the catabolism of short chain fatty acids (SCFA) via the 2-methylcitrate cycle I (propionate degradation route). Catalyzes the thermodynamically favored C-C bond cleavage of (2R,3S)-2-methylisocitrate to yield pyruvate and succinate via an alpha-carboxy-carbanion intermediate. The sequence is that of Probable 2-methylisocitrate lyase 2 from Corynebacterium glutamicum (strain ATCC 13032 / DSM 20300 / JCM 1318 / BCRC 11384 / CCUG 27702 / LMG 3730 / NBRC 12168 / NCIMB 10025 / NRRL B-2784 / 534).